Consider the following 405-residue polypeptide: MITGPISNLSGESGFENVFIFISDSLRYDALPERIRSKGLTIKTIAAAPWTASSIPSLMSGKYPSSHNVWMFEDRLPQRPPLLSEQEDWDAGFDSEKHWLKFESSEKPPVKMLRLDGEQKLADIEPPFVHVVHDLGPHAPYGFENDEYETGPYFRDYNDPKDLQQKYQNDAEKSANYFLEILDKLENLGLREDTLCVFTSDHGELLGEGGRLGGKWGHSTPLCPELLEVPMTFIGKGIPKGETLSGVASGVDLAPTCLSAVGREIGHVDGIDLWAETPDEDRRVRSDVWQRYNAFGRELPVYVASGLWDNDGGWVKHRRSKLLRMAYYGYDVFLGDYAPPARSTTGISELVSGLKFWGRDWEKFGNTTISLQEAQKELSDELVRSEDSVELSEEQTEHLEALGYV.

Positions 24, 201, and 202 each coordinate Ca(2+).

The protein belongs to the sulfatase family. Ca(2+) serves as cofactor.

Its pathway is protein modification; protein glycosylation. The protein operates within cell surface structure biogenesis; S-layer biogenesis. Its function is as follows. Involved in N-glycan biosynthetic pathway that takes place under low-salt conditions (1.75 M instead of 3.4 M). Participates in the formation of the tetrasaccharide present at 'Asn-532' of S-layer glycoprotein Csg, consisting of a sulfated hexose, 2 hexoses and rhamnose. Mediates sulfation of sugar 1 in the tetrasaccharide. The sequence is that of Low-salt glycan biosynthesis sulfotransferase Agl7 from Haloferax volcanii (strain ATCC 29605 / DSM 3757 / JCM 8879 / NBRC 14742 / NCIMB 2012 / VKM B-1768 / DS2) (Halobacterium volcanii).